The chain runs to 327 residues: Malate dehydrogenase (327 aa).

Position 11–17 (11–17 (GAAGQIA)) interacts with NAD(+). Substrate is bound by residues Arg92 and Arg98. NAD(+) contacts are provided by residues Asn105, Gln112, and 129–131 (VGN). Residues Asn131 and Arg162 each coordinate substrate. His187 (proton acceptor) is an active-site residue.

Belongs to the LDH/MDH superfamily. MDH type 2 family.

It carries out the reaction (S)-malate + NAD(+) = oxaloacetate + NADH + H(+). Its function is as follows. Catalyzes the reversible oxidation of malate to oxaloacetate. The chain is Malate dehydrogenase from Nitrosospira multiformis (strain ATCC 25196 / NCIMB 11849 / C 71).